Reading from the N-terminus, the 27-residue chain is Cruzioseptin-14 (27 aa).

Expressed by the skin glands.

It localises to the secreted. Its function is as follows. Has antimicrobial activity. The sequence is that of Cruzioseptin-14 from Cruziohyla calcarifer (Splendid leaf frog).